Reading from the N-terminus, the 453-residue chain is UPF0210 protein MM_0081 (453 aa).

It belongs to the UPF0210 family.

This is UPF0210 protein MM_0081 from Methanosarcina mazei (strain ATCC BAA-159 / DSM 3647 / Goe1 / Go1 / JCM 11833 / OCM 88) (Methanosarcina frisia).